Consider the following 131-residue polypeptide: Hyastatin (131 aa).

An N-terminal signal peptide occupies residues 1–16 (MRVLLILVSLAALAHA). Cystine bridges form between Cys-103/Cys-117, Cys-107/Cys-124, and Cys-118/Cys-125. Position 130 is a lysine amide (Lys-130).

In terms of tissue distribution, strongly expressed in hemocytes, with weaker expression in gills and epidermis. Expressed at low levels in hepatopancreas.

Its subcellular location is the cytoplasmic granule. Antimicrobial peptide. Has strong antibacterial activity against the Gram-positive bacterium C.glutamicum (MIC=0.4 uM) and the Gram-negative bacterium E.coli (MIC=12.5 uM). Has weak antibacterial activity against the Gram-positive bacterium S.aureus (MIC&gt;50 uM) and the Gram-negative bacterium P.aeruginosa (MIC&gt;50 uM). Has antifungal activity against S.cerevisiae (MIC=12.5) and C.albicans (MIC=6.3 uM). Has weak antifungal activity against the mold B.cinerea. Presents chitin-binding activity. This Hyas araneus (Atlantic lyre crab) protein is Hyastatin.